The sequence spans 358 residues: Protein-glutamate methylesterase/protein-glutamine glutaminase 1 (358 aa).

Residues 7-124 (SVLLVDDSAV…KNFLIDSAAE (118 aa)) enclose the Response regulatory domain. D58 carries the 4-aspartylphosphate modification. The CheB-type methylesterase domain maps to 170–358 (AQTTERIVAI…QEIHQAILHR (189 aa)). Catalysis depends on residues S182, H208, and D304.

The protein belongs to the CheB family. Phosphorylated by CheA. Phosphorylation of the N-terminal regulatory domain activates the methylesterase activity.

The protein resides in the cytoplasm. The catalysed reaction is [protein]-L-glutamate 5-O-methyl ester + H2O = L-glutamyl-[protein] + methanol + H(+). It carries out the reaction L-glutaminyl-[protein] + H2O = L-glutamyl-[protein] + NH4(+). Functionally, involved in chemotaxis. Part of a chemotaxis signal transduction system that modulates chemotaxis in response to various stimuli. Catalyzes the demethylation of specific methylglutamate residues introduced into the chemoreceptors (methyl-accepting chemotaxis proteins or MCP) by CheR. Also mediates the irreversible deamidation of specific glutamine residues to glutamic acid. This Pseudomonas savastanoi pv. phaseolicola (strain 1448A / Race 6) (Pseudomonas syringae pv. phaseolicola (strain 1448A / Race 6)) protein is Protein-glutamate methylesterase/protein-glutamine glutaminase 1.